A 221-amino-acid polypeptide reads, in one-letter code: Riboflavin kinase (221 aa).

The tract at residues 1–89 (MENIYIALKT…ISSILRFSQE (89 aa)) is H-T-H motif-like. A riboflavin kinase region spans residues 90-221 (LKLVGAVQDG…EVLASIDGKL (132 aa)). 99–104 (GLGEGK) serves as a coordination point for CDP. Mg(2+) is bound by residues threonine 128 and asparagine 130. Positions 185 and 192 each coordinate FMN. 197–200 (KYLR) contacts CDP.

The protein belongs to the archaeal riboflavin kinase family. It depends on Mg(2+) as a cofactor.

It catalyses the reaction riboflavin + CTP = CDP + FMN + H(+). It functions in the pathway cofactor biosynthesis; FMN biosynthesis; FMN from riboflavin (CTP route): step 1/1. Catalyzes the CTP-dependent phosphorylation of riboflavin (vitamin B2) to form flavin mononucleotide (FMN). This Picrophilus torridus (strain ATCC 700027 / DSM 9790 / JCM 10055 / NBRC 100828 / KAW 2/3) protein is Riboflavin kinase (ribK).